Here is a 636-residue protein sequence, read N- to C-terminus: Cysteine-rich receptor-like protein kinase 24 (636 aa).

The N-terminal stretch at 1–20 is a signal peptide; it reads MVKFLVIFWFVVISFSHVSA. Gnk2-homologous domains are found at residues 21–124 and 130–235; these read QVCL…NRSF and MEIL…LYPF. Over 21 to 254 the chain is Extracellular; that stretch reads QVCLERSGFF…RQKDGKSIST (234 aa). N-linked (GlcNAc...) asparagine glycans are attached at residues Asn-33, Asn-50, Asn-98, Asn-101, Asn-121, Asn-137, Asn-145, and Asn-197. A helical transmembrane segment spans residues 255 to 275; the sequence is GAIVAIIVVPILLLALGVGLW. Residues 276 to 636 are Cytoplasmic-facing; the sequence is KRRKAYKTKT…SVSVTCVSPR (361 aa). One can recognise a Protein kinase domain in the interval 312–585; that stretch reads FHNVNKLGHG…TMSTVFHMLT (274 aa). ATP contacts are provided by residues 318–326 and Lys-340; that span reads LGHGGFGEV. The Proton acceptor role is filled by Asp-437.

The protein belongs to the protein kinase superfamily. Ser/Thr protein kinase family. CRK subfamily.

Its subcellular location is the membrane. It catalyses the reaction L-seryl-[protein] + ATP = O-phospho-L-seryl-[protein] + ADP + H(+). The catalysed reaction is L-threonyl-[protein] + ATP = O-phospho-L-threonyl-[protein] + ADP + H(+). The sequence is that of Cysteine-rich receptor-like protein kinase 24 (CRK24) from Arabidopsis thaliana (Mouse-ear cress).